The primary structure comprises 176 residues: MAMSFEWPWQYRFPPFFTLQPNVDTRQKQLAAWCSLVLSFCRLHKQSSMTVMEAQESPLFNNVKLQRKLPVESIQIVLEELRKKGNLEWLDKNKSSFLIMWRRPEEWGKLIYQWVSRSGQNNSVFTLYELTSGEDTEDEEFHGLDEATLLRALQALQQEHKAEIITVSDGRGVKFF.

It belongs to the VPS25 family. Component of a complex at least composed of ELL, SNF8/EAP30, VPS25/EAP20 and VPS36/EAP45. Component of the endosomal sorting complex required for transport II (ESCRT-II), composed of SNF8, VPS36 and 2 copies of VPS25. Interacts with CFTR; the interaction requires misfolded CFTR. Interacts (via C-terminal half) with the ESCRT-III subunit CHMP6 (via N-terminal half).

The protein resides in the cytoplasm. It localises to the endosome membrane. It is found in the nucleus. Its function is as follows. Component of the ESCRT-II complex (endosomal sorting complex required for transport II), which is required for multivesicular body (MVB) formation and sorting of endosomal cargo proteins into MVBs. The MVB pathway mediates delivery of transmembrane proteins into the lumen of the lysosome for degradation. The ESCRT-II complex is probably involved in the recruitment of the ESCRT-III complex. The ESCRT-II complex may also play a role in transcription regulation, possibly via its interaction with ELL. In Mus musculus (Mouse), this protein is Vacuolar protein-sorting-associated protein 25 (Vps25).